The sequence spans 98 residues: Integration host factor subunit beta (98 aa).

Belongs to the bacterial histone-like protein family. Heterodimer of an alpha and a beta chain.

This protein is one of the two subunits of integration host factor, a specific DNA-binding protein that functions in genetic recombination as well as in transcriptional and translational control. In Hahella chejuensis (strain KCTC 2396), this protein is Integration host factor subunit beta.